The following is a 298-amino-acid chain: Lipoyl synthase (298 aa).

[4Fe-4S] cluster-binding residues include cysteine 40, cysteine 45, cysteine 51, cysteine 67, cysteine 71, cysteine 74, and serine 280. The Radical SAM core domain maps to 53–269 (AVRKTATFMI…KEIALSKGFS (217 aa)).

Belongs to the radical SAM superfamily. Lipoyl synthase family. Requires [4Fe-4S] cluster as cofactor.

It is found in the cytoplasm. The catalysed reaction is [[Fe-S] cluster scaffold protein carrying a second [4Fe-4S](2+) cluster] + N(6)-octanoyl-L-lysyl-[protein] + 2 oxidized [2Fe-2S]-[ferredoxin] + 2 S-adenosyl-L-methionine + 4 H(+) = [[Fe-S] cluster scaffold protein] + N(6)-[(R)-dihydrolipoyl]-L-lysyl-[protein] + 4 Fe(3+) + 2 hydrogen sulfide + 2 5'-deoxyadenosine + 2 L-methionine + 2 reduced [2Fe-2S]-[ferredoxin]. It functions in the pathway protein modification; protein lipoylation via endogenous pathway; protein N(6)-(lipoyl)lysine from octanoyl-[acyl-carrier-protein]. Catalyzes the radical-mediated insertion of two sulfur atoms into the C-6 and C-8 positions of the octanoyl moiety bound to the lipoyl domains of lipoate-dependent enzymes, thereby converting the octanoylated domains into lipoylated derivatives. The sequence is that of Lipoyl synthase from Bacillus mycoides (strain KBAB4) (Bacillus weihenstephanensis).